The primary structure comprises 355 residues: Uroporphyrinogen decarboxylase (355 aa).

Residues 27–31 (RQAGR), phenylalanine 46, aspartate 78, tyrosine 155, serine 210, and histidine 328 each bind substrate.

This sequence belongs to the uroporphyrinogen decarboxylase family. As to quaternary structure, homodimer.

The protein resides in the cytoplasm. It catalyses the reaction uroporphyrinogen III + 4 H(+) = coproporphyrinogen III + 4 CO2. The protein operates within porphyrin-containing compound metabolism; protoporphyrin-IX biosynthesis; coproporphyrinogen-III from 5-aminolevulinate: step 4/4. Its function is as follows. Catalyzes the decarboxylation of four acetate groups of uroporphyrinogen-III to yield coproporphyrinogen-III. This is Uroporphyrinogen decarboxylase from Pseudomonas aeruginosa (strain ATCC 15692 / DSM 22644 / CIP 104116 / JCM 14847 / LMG 12228 / 1C / PRS 101 / PAO1).